The chain runs to 829 residues: Protein roadkill (829 aa).

3 stretches are compositionally biased toward low complexity: residues 24–36 (EQQQ…QQQQ), 122–140 (TPAA…QAAP), and 266–288 (SSSS…SSSS). Disordered stretches follow at residues 24 to 47 (EQQQ…CCEN), 106 to 142 (SSLQ…APSV), 266 to 296 (SSSS…SHHS), and 313 to 400 (HLNQ…NQQQ). Positions 313–322 (HLNQQQHHHP) are enriched in basic residues. Composition is skewed to low complexity over residues 323 to 353 (LSAS…QQQH), 372 to 382 (SSSSSSSSSSS), and 389 to 400 (SSSSSNSNNQQQ). Residues 486-616 (KFSYMWTINN…EDKLTIFCEV (131 aa)) enclose the MATH domain. Positions 655–722 (SDVTLSVGGR…IYTGKAPNLE (68 aa)) constitute a BTB domain.

Belongs to the Tdpoz family. Interacts with ci and gft/CUL3. In terms of tissue distribution, expressed near the anterio-posterior compartment boundary of antenna, leg and wing disks.

It is found in the nucleus. It participates in protein modification; protein ubiquitination. Involved in segment polarity. In complex with gft/CUL3, promotes ubiquitination of ci and its subsequent degradation by the proteasome, which results in hh signaling attenuation. This regulation may be important during eye formation for proper packing of ommatidia into a hexagonal array. This is Protein roadkill (rdx) from Drosophila melanogaster (Fruit fly).